Consider the following 173-residue polypeptide: NADH-quinone oxidoreductase subunit B (173 aa).

[4Fe-4S] cluster is bound by residues C52, C53, C117, and C147.

This sequence belongs to the complex I 20 kDa subunit family. NDH-1 is composed of 14 different subunits. Subunits NuoB, C, D, E, F, and G constitute the peripheral sector of the complex. [4Fe-4S] cluster serves as cofactor.

The protein resides in the cell inner membrane. The enzyme catalyses a quinone + NADH + 5 H(+)(in) = a quinol + NAD(+) + 4 H(+)(out). In terms of biological role, NDH-1 shuttles electrons from NADH, via FMN and iron-sulfur (Fe-S) centers, to quinones in the respiratory chain. Couples the redox reaction to proton translocation (for every two electrons transferred, four hydrogen ions are translocated across the cytoplasmic membrane), and thus conserves the redox energy in a proton gradient. This chain is NADH-quinone oxidoreductase subunit B, found in Pelagibacter ubique (strain HTCC1062).